The sequence spans 280 residues: Eukaryotic translation initiation factor 3 subunit F-1 (280 aa).

An MPN domain is found at 8–138 (VRVHPVVLFQ…LRAYVCIQLG (131 aa)).

It belongs to the eIF-3 subunit F family. As to quaternary structure, component of the eukaryotic translation initiation factor 3 (eIF-3) complex. The eIF-3 complex interacts with pix.

It localises to the cytoplasm. Component of the eukaryotic translation initiation factor 3 (eIF-3) complex, which is involved in protein synthesis of a specialized repertoire of mRNAs and, together with other initiation factors, stimulates binding of mRNA and methionyl-tRNAi to the 40S ribosome. The eIF-3 complex specifically targets and initiates translation of a subset of mRNAs involved in cell proliferation. The protein is Eukaryotic translation initiation factor 3 subunit F-1 of Drosophila virilis (Fruit fly).